The following is a 346-amino-acid chain: Biotin synthase (346 aa).

A Radical SAM core domain is found at 38-256 (RQVQVSTLLS…IAVARIMMPT (219 aa)). Residues Cys53, Cys57, and Cys60 each contribute to the [4Fe-4S] cluster site. [2Fe-2S] cluster-binding residues include Cys97, Cys128, Cys188, and Arg260.

Belongs to the radical SAM superfamily. Biotin synthase family. As to quaternary structure, homodimer. [4Fe-4S] cluster serves as cofactor. Requires [2Fe-2S] cluster as cofactor.

The catalysed reaction is (4R,5S)-dethiobiotin + (sulfur carrier)-SH + 2 reduced [2Fe-2S]-[ferredoxin] + 2 S-adenosyl-L-methionine = (sulfur carrier)-H + biotin + 2 5'-deoxyadenosine + 2 L-methionine + 2 oxidized [2Fe-2S]-[ferredoxin]. The protein operates within cofactor biosynthesis; biotin biosynthesis; biotin from 7,8-diaminononanoate: step 2/2. Functionally, catalyzes the conversion of dethiobiotin (DTB) to biotin by the insertion of a sulfur atom into dethiobiotin via a radical-based mechanism. The chain is Biotin synthase from Escherichia coli (strain K12 / DH10B).